We begin with the raw amino-acid sequence, 505 residues long: Maturase K (505 aa).

Belongs to the intron maturase 2 family. MatK subfamily.

The protein resides in the plastid. It localises to the chloroplast. Functionally, usually encoded in the trnK tRNA gene intron. Probably assists in splicing its own and other chloroplast group II introns. This chain is Maturase K, found in Silene otites (Spanish catchfly).